The primary structure comprises 310 residues: Porphobilinogen deaminase (310 aa).

S-(dipyrrolylmethanemethyl)cysteine is present on C242.

Belongs to the HMBS family. In terms of assembly, monomer. Dipyrromethane serves as cofactor.

The enzyme catalyses 4 porphobilinogen + H2O = hydroxymethylbilane + 4 NH4(+). It functions in the pathway porphyrin-containing compound metabolism; protoporphyrin-IX biosynthesis; coproporphyrinogen-III from 5-aminolevulinate: step 2/4. Tetrapolymerization of the monopyrrole PBG into the hydroxymethylbilane pre-uroporphyrinogen in several discrete steps. The chain is Porphobilinogen deaminase from Shewanella sp. (strain ANA-3).